Reading from the N-terminus, the 231-residue chain is Cytochrome c oxidase subunit 2 (231 aa).

Residues 1 to 14 lie on the Mitochondrial intermembrane side of the membrane; sequence MAHPAQLGLQNATS. Residues 15 to 45 traverse the membrane as a helical segment; it reads PIMEELIAFHDHALMIIFLISSLVLYVISLM. Residues 46-59 are Mitochondrial matrix-facing; it reads LTTKLTHTSTMNAQ. A helical transmembrane segment spans residues 60 to 87; sequence EIEMIWTILPAIILIMIALPSLRILYMT. Over 88-231 the chain is Mitochondrial intermembrane; it reads DEFNKPYLTL…WASYLYIVSL (144 aa). Residues histidine 161, cysteine 196, glutamate 198, cysteine 200, histidine 204, and methionine 207 each contribute to the Cu cation site. Glutamate 198 serves as a coordination point for Mg(2+).

The protein belongs to the cytochrome c oxidase subunit 2 family. In terms of assembly, component of the cytochrome c oxidase (complex IV, CIV), a multisubunit enzyme composed of 14 subunits. The complex is composed of a catalytic core of 3 subunits MT-CO1, MT-CO2 and MT-CO3, encoded in the mitochondrial DNA, and 11 supernumerary subunits COX4I, COX5A, COX5B, COX6A, COX6B, COX6C, COX7A, COX7B, COX7C, COX8 and NDUFA4, which are encoded in the nuclear genome. The complex exists as a monomer or a dimer and forms supercomplexes (SCs) in the inner mitochondrial membrane with NADH-ubiquinone oxidoreductase (complex I, CI) and ubiquinol-cytochrome c oxidoreductase (cytochrome b-c1 complex, complex III, CIII), resulting in different assemblies (supercomplex SCI(1)III(2)IV(1) and megacomplex MCI(2)III(2)IV(2)). Found in a complex with TMEM177, COA6, COX18, COX20, SCO1 and SCO2. Interacts with TMEM177 in a COX20-dependent manner. Interacts with COX20. Interacts with COX16. Cu cation serves as cofactor.

Its subcellular location is the mitochondrion inner membrane. It catalyses the reaction 4 Fe(II)-[cytochrome c] + O2 + 8 H(+)(in) = 4 Fe(III)-[cytochrome c] + 2 H2O + 4 H(+)(out). In terms of biological role, component of the cytochrome c oxidase, the last enzyme in the mitochondrial electron transport chain which drives oxidative phosphorylation. The respiratory chain contains 3 multisubunit complexes succinate dehydrogenase (complex II, CII), ubiquinol-cytochrome c oxidoreductase (cytochrome b-c1 complex, complex III, CIII) and cytochrome c oxidase (complex IV, CIV), that cooperate to transfer electrons derived from NADH and succinate to molecular oxygen, creating an electrochemical gradient over the inner membrane that drives transmembrane transport and the ATP synthase. Cytochrome c oxidase is the component of the respiratory chain that catalyzes the reduction of oxygen to water. Electrons originating from reduced cytochrome c in the intermembrane space (IMS) are transferred via the dinuclear copper A center (CU(A)) of subunit 2 and heme A of subunit 1 to the active site in subunit 1, a binuclear center (BNC) formed by heme A3 and copper B (CU(B)). The BNC reduces molecular oxygen to 2 water molecules using 4 electrons from cytochrome c in the IMS and 4 protons from the mitochondrial matrix. This is Cytochrome c oxidase subunit 2 (MT-CO2) from Alouatta palliata (Mantled howler monkey).